A 189-amino-acid chain; its full sequence is Probable nicotinate-nucleotide adenylyltransferase (189 aa).

Belongs to the NadD family.

The catalysed reaction is nicotinate beta-D-ribonucleotide + ATP + H(+) = deamido-NAD(+) + diphosphate. Its pathway is cofactor biosynthesis; NAD(+) biosynthesis; deamido-NAD(+) from nicotinate D-ribonucleotide: step 1/1. In terms of biological role, catalyzes the reversible adenylation of nicotinate mononucleotide (NaMN) to nicotinic acid adenine dinucleotide (NaAD). In Bacillus licheniformis (strain ATCC 14580 / DSM 13 / JCM 2505 / CCUG 7422 / NBRC 12200 / NCIMB 9375 / NCTC 10341 / NRRL NRS-1264 / Gibson 46), this protein is Probable nicotinate-nucleotide adenylyltransferase.